The sequence spans 344 residues: L-rhamnose-proton symporter (344 aa).

Transmembrane regions (helical) follow at residues Ala-4–Ala-24, Trp-38–Leu-58, Phe-68–Ile-88, Met-101–Ile-121, Thr-137–Leu-157, Leu-175–Ala-195, Leu-214–Ile-234, Val-259–Gly-279, Ile-290–Leu-310, and Val-323–Ala-343.

This sequence belongs to the L-rhamnose transporter (TC 2.A.7.6) family.

The protein resides in the cell inner membrane. It catalyses the reaction L-rhamnopyranose(in) + H(+)(in) = L-rhamnopyranose(out) + H(+)(out). Its function is as follows. Uptake of L-rhamnose across the cytoplasmic membrane with the concomitant transport of protons into the cell (symport system). The protein is L-rhamnose-proton symporter of Shigella boydii serotype 18 (strain CDC 3083-94 / BS512).